A 241-amino-acid chain; its full sequence is Tumor necrosis factor receptor superfamily member 18 (241 aa).

Positions 1–25 are cleaved as a signal peptide; the sequence is MAQHGAMGAFRALCGLALLCALSLG. The Extracellular portion of the chain corresponds to 26–162; the sequence is QRPTGGPGCG…CVPGSPPAEP (137 aa). Intrachain disulfides connect cysteine 34-cysteine 49, cysteine 74-cysteine 86, cysteine 81-cysteine 94, cysteine 115-cysteine 134, and cysteine 128-cysteine 153. TNFR-Cys repeat units lie at residues 34 to 72, 74 to 112, and 115 to 153; these read CGPG…EWDC, CVQP…GFQC, and CASG…NAVC. An N-linked (GlcNAc...) asparagine glycan is attached at asparagine 146. Residues 163–183 form a helical membrane-spanning segment; that stretch reads LGWLTVVLLAVAACVLLLTSA. The Cytoplasmic portion of the chain corresponds to 184-241; it reads QLGLHIWQLRSQCMWPRETQLLLEVPPSTEDARSCQFPEEERGERSAEEKGRLGDLWV. Residues 214 to 241 are disordered; it reads DARSCQFPEEERGERSAEEKGRLGDLWV. A compositionally biased stretch (basic and acidic residues) spans 222–241; it reads EEERGERSAEEKGRLGDLWV.

Binds to TRAF1, TRAF2, and TRAF3, but not TRAF5 and TRAF6. Binds through its C-terminus to SIVA1/SIVA. Expressed in lymph node, peripheral blood leukocytes and weakly in spleen.

Its subcellular location is the cell membrane. The protein resides in the secreted. In terms of biological role, receptor for TNFSF18. Seems to be involved in interactions between activated T-lymphocytes and endothelial cells and in the regulation of T-cell receptor-mediated cell death. Mediated NF-kappa-B activation via the TRAF2/NIK pathway. The sequence is that of Tumor necrosis factor receptor superfamily member 18 (TNFRSF18) from Homo sapiens (Human).